A 418-amino-acid chain; its full sequence is MTKKAVLIGINYPGTKAELRGCVNDVRRMYKCLVERYGFSEENITVLIDTDESSTQPTGKNIRRALADLVESADSGDVLVVHYSGHGTRLPAETGEDDDTGFDECIVPCDMNLITDDDFRDLVDKVPPGCRMTIISDSCHSGGLIDEAKEQIGESTKKEAEDEDESEESSSRFGFRKFLRSKVEGAIESRGFHIGGNKKDEDEAEEIETKEIELEDGETIHAKDKSLPLQTLIDILKQQTGNDNIEVGKIRPSLFDAFGDDSSPKVKKFMKVILGKLQAGNGEEGGLMGMLGKLASGFLEGKLNDEDYVKPAMQTHVGSKEEVYAGGSRGSVPLPDSGILISGCQTDQTSADATPAGKPTEAYGAMSNSIQTILEETDGEISNREMVTRARKALKKQGFTQQPGLYCHDGYANAPFIC.

Residues His86 and Cys139 contribute to the active site. Cys139 bears the S-nitrosocysteine mark. The interval 153-172 (GESTKKEAEDEDESEESSSR) is disordered.

This sequence belongs to the peptidase C14B family. The two subunits are derived from the precursor sequence by an autocatalytic mechanism. Expressed in roots, cotyledons, leaves, cauline leaves, pollen and embryos.

The protein resides in the cytoplasm. It is found in the cytosol. Activated by Ca(2+) which induces self-processing and accelerates the rate of the enzyme activity, but has no effect on Km. Cysteine protease that cleaves specifically after arginine or lysine residues. Does not cleave caspase-specific substrates. Plays a positive regulatory role in biotic and abiotic stress-induced programmed cell death. The polypeptide is Metacaspase-4 (AMC4) (Arabidopsis thaliana (Mouse-ear cress)).